We begin with the raw amino-acid sequence, 327 residues long: 4-hydroxy-2-oxoglutarate aldolase, mitochondrial (327 aa).

The transit peptide at 1–25 (MLVPRVWSSVRLGLSRVLSRTLRGW) directs the protein to the mitochondrion. Residue 77 to 78 (SN) coordinates substrate. The active-site Schiff-base intermediate with substrate is the K196. Substrate-binding residues include S198 and G222.

It belongs to the DapA family. In terms of assembly, homotetramer.

It localises to the mitochondrion. The catalysed reaction is (4S)-4-hydroxy-2-oxoglutarate = glyoxylate + pyruvate. It catalyses the reaction (4R)-4-hydroxy-2-oxoglutarate = glyoxylate + pyruvate. Its activity is regulated as follows. Inhibited by divalent cations. Catalyzes the final step in the metabolic pathway of hydroxyproline. In Bos taurus (Bovine), this protein is 4-hydroxy-2-oxoglutarate aldolase, mitochondrial (HOGA1).